Reading from the N-terminus, the 165-residue chain is Sporulation thiol-disulfide oxidoreductase A (165 aa).

Residues 1 to 26 (MLTKRLLTIYIMLLGLIAWFPGAAQA) form the signal peptide. Residues 27 to 165 (EEKQPAVPAV…AEQLKEWTEE (139 aa)) enclose the Thioredoxin domain. The cysteines at positions 65 and 68 are disulfide-linked.

Belongs to the thioredoxin family.

It is found in the spore outer membrane. Its function is as follows. Thiol-disulfide oxidoreductase with a reductive function, involved in spore cortex synthesis. It could be involved either in breaking disulfide bonds in cortex components or in proteins that are important for cortex synthesis, or in thiol/disulfide bond interchange. In Bacillus subtilis (strain 168), this protein is Sporulation thiol-disulfide oxidoreductase A (stoA).